A 291-amino-acid chain; its full sequence is Cell division control protein 2 homolog 1 (291 aa).

Residues Gly1–Phe284 enclose the Protein kinase domain. ATP-binding positions include Ile7 to Val15 and Lys30. Thr11 carries the post-translational modification Phosphothreonine. Phosphotyrosine is present on Tyr12. The active-site Proton acceptor is the Asp124. Thr158 is modified (phosphothreonine; by CAK).

The protein belongs to the protein kinase superfamily. CMGC Ser/Thr protein kinase family. CDC2/CDKX subfamily. Found in most organs including root, young leaf, stem, vegetative meristem and flower bud.

The catalysed reaction is L-seryl-[protein] + ATP = O-phospho-L-seryl-[protein] + ADP + H(+). It catalyses the reaction L-threonyl-[protein] + ATP = O-phospho-L-threonyl-[protein] + ADP + H(+). The enzyme catalyses [DNA-directed RNA polymerase] + ATP = phospho-[DNA-directed RNA polymerase] + ADP + H(+). Its activity is regulated as follows. Phosphorylation at Thr-11 or Tyr-12 inactivates the enzyme, while phosphorylation at Thr-158 activates it. Its function is as follows. Plays a key role in the control of the eukaryotic cell cycle. Component of the kinase complex that phosphorylates the repetitive C-terminus of RNA polymerase II. This is Cell division control protein 2 homolog 1 (CDC2A) from Medicago sativa (Alfalfa).